The chain runs to 321 residues: Tet-like dioxygenase 1 (321 aa).

Residues aspartate 198–lysine 298 enclose the Fe2OG dioxygenase domain. 2-oxoglutarate contacts are provided by asparagine 214 and arginine 224. Histidine 229 and aspartate 231 together coordinate Fe cation. Residue tyrosine 242 participates in 2-oxoglutarate binding. Position 279 (histidine 279) interacts with Fe cation. Arginine 289 lines the 2-oxoglutarate pocket. Glutamine 310 is a binding site for substrate.

The cofactor is Fe(2+).

It carries out the reaction a 5-methyl-2'-deoxycytidine in DNA + 2-oxoglutarate + O2 = a 5-hydroxymethyl-2'-deoxycytidine in DNA + succinate + CO2. It catalyses the reaction a 5-hydroxymethyl-2'-deoxycytidine in DNA + 2-oxoglutarate + O2 = a 5-formyl-2'-deoxycytidine in DNA + succinate + CO2 + H2O. The catalysed reaction is a 5-formyl-2'-deoxycytidine in DNA + 2-oxoglutarate + O2 = a 5-carboxyl-2'-deoxycytidine in DNA + succinate + CO2 + H(+). In terms of biological role, dioxygenase that catalyzes the conversion of the modified genomic base 5-methylcytosine (5mC) into 5-hydroxymethylcytosine (5hmC), and thereby plays a role in active DNA demethylation. Also mediates subsequent conversion of 5hmC into 5-formylcytosine (5fC), and conversion of 5fC to 5-carboxylcytosine (5caC). This is Tet-like dioxygenase 1 from Naegleria gruberi (Amoeba).